Reading from the N-terminus, the 138-residue chain is Histone H2B.4 (138 aa).

Basic and acidic residues predominate over residues 1 to 39 (MAPKAAEKKPAEKKPAGKAPAEKLPKAEKKISKDAGGSE). Residues 1 to 48 (MAPKAAEKKPAEKKPAGKAPAEKLPKAEKKISKDAGGSEKKKKKSKKS) are disordered. Ala-2 carries the n,N,N-trimethylalanine; alternate modification. Ala-2 is modified (n,N-dimethylalanine; alternate). Ala-2 is modified (N-methylalanine; alternate). Lys-4 bears the N6-methyllysine mark. Residues Lys-8 and Lys-13 each carry the N6-acetyllysine modification. Lys-14 is modified (N6,N6-dimethyllysine). 4 positions are modified to N6-acetyllysine: Lys-18, Lys-23, Lys-29, and Lys-30. Lys-135 participates in a covalent cross-link: Glycyl lysine isopeptide (Lys-Gly) (interchain with G-Cter in ubiquitin).

It belongs to the histone H2B family. The nucleosome is a histone octamer containing two molecules each of H2A, H2B, H3 and H4 assembled in one H3-H4 heterotetramer and two H2A-H2B heterodimers. The octamer wraps approximately 147 bp of DNA. Can be acetylated to form H2BK6ac, H2BK33ac and H2BK34ac. In terms of processing, monoubiquitinated by BRE1 to form H2BK143ub1 and deubiquitinated by UBP26. Required for heterochromatic histone H3 di- and trimethylation at H3K4me. May give a specific tag for epigenetic transcriptional activation.

It is found in the nucleus. Its subcellular location is the chromosome. Its function is as follows. Core component of nucleosome. Nucleosomes wrap and compact DNA into chromatin, limiting DNA accessibility to the cellular machineries which require DNA as a template. Histones thereby play a central role in transcription regulation, DNA repair, DNA replication and chromosomal stability. DNA accessibility is regulated via a complex set of post-translational modifications of histones, also called histone code, and nucleosome remodeling. This chain is Histone H2B.4, found in Arabidopsis thaliana (Mouse-ear cress).